The primary structure comprises 284 residues: Shikimate dehydrogenase (NADP(+)) (284 aa).

Shikimate is bound by residues 20 to 22 (SIS) and Ser67. Catalysis depends on Lys71, which acts as the Proton acceptor. Asp83 contributes to the NADP(+) binding site. Shikimate is bound by residues Asn92 and Asp107. NADP(+)-binding positions include 129 to 133 (GAGGA) and Ile227. Shikimate is bound at residue Tyr229. Residue Gly250 coordinates NADP(+).

Belongs to the shikimate dehydrogenase family. As to quaternary structure, homodimer.

It carries out the reaction shikimate + NADP(+) = 3-dehydroshikimate + NADPH + H(+). It functions in the pathway metabolic intermediate biosynthesis; chorismate biosynthesis; chorismate from D-erythrose 4-phosphate and phosphoenolpyruvate: step 4/7. Its function is as follows. Involved in the biosynthesis of the chorismate, which leads to the biosynthesis of aromatic amino acids. Catalyzes the reversible NADPH linked reduction of 3-dehydroshikimate (DHSA) to yield shikimate (SA). The sequence is that of Shikimate dehydrogenase (NADP(+)) from Streptococcus pneumoniae (strain 70585).